Here is a 161-residue protein sequence, read N- to C-terminus: Phosphopantetheine adenylyltransferase (161 aa).

Substrate is bound at residue threonine 10. ATP-binding positions include 10–11 (TF) and histidine 18. Residues lysine 42, methionine 74, and arginine 88 each contribute to the substrate site. ATP-binding positions include 89–91 (GLR), glutamate 99, and 124–130 (WSFISSS).

Belongs to the bacterial CoaD family. In terms of assembly, homohexamer. Mg(2+) serves as cofactor.

The protein localises to the cytoplasm. It carries out the reaction (R)-4'-phosphopantetheine + ATP + H(+) = 3'-dephospho-CoA + diphosphate. It functions in the pathway cofactor biosynthesis; coenzyme A biosynthesis; CoA from (R)-pantothenate: step 4/5. In terms of biological role, reversibly transfers an adenylyl group from ATP to 4'-phosphopantetheine, yielding dephospho-CoA (dPCoA) and pyrophosphate. The chain is Phosphopantetheine adenylyltransferase from Edwardsiella ictaluri (strain 93-146).